The chain runs to 282 residues: Acyl-CoA-binding domain-containing protein 6 (282 aa).

Residues 1 to 39 (MATPFLPSGATTGDSGGELSSGDDSGDMESFQTPEAEGT) form a disordered region. S41 is subject to Phosphoserine. In terms of domain architecture, ACB spans 42–127 (LAELFEKAAA…VKKLDPGWNP (86 aa)). An acyl-CoA is bound by residues 69 to 73 (YARFK) and K95. S106 is subject to Phosphoserine. Residue Y114 coordinates an acyl-CoA. ANK repeat units lie at residues 191-220 (EGRA…GINC) and 224-253 (EGQT…DPTL).

Monomer.

The protein resides in the cytoplasm. It localises to the nucleus. Functionally, binds long-chain acyl-coenzyme A molecules with a strong preference for unsaturated C18:1-CoA, lower affinity for unsaturated C20:4-CoA, and very weak affinity for saturated C16:0-CoA. Does not bind fatty acids. Plays a role in protein N-myristoylation. This is Acyl-CoA-binding domain-containing protein 6 (Acbd6) from Mus musculus (Mouse).